Here is a 770-residue protein sequence, read N- to C-terminus: uncharacterized protein (770 aa).

Residues 1 to 24 (MVSAAWLRYPSLLTLGILVSRVAA) form the signal peptide. Asn78, Asn204, Asn533, and Asn638 each carry an N-linked (GlcNAc...) asparagine glycan. The interval 746–770 (SWGTGQNDVPPSLGAGIKRDGLRFT) is disordered.

Belongs to the glycosyl hydrolase 92 family.

It is found in the secreted. This is an uncharacterized protein from Arthroderma benhamiae (strain ATCC MYA-4681 / CBS 112371) (Trichophyton mentagrophytes).